A 158-amino-acid chain; its full sequence is 2-C-methyl-D-erythritol 2,4-cyclodiphosphate synthase (158 aa).

Residues Asp9 and His11 each coordinate a divalent metal cation. 4-CDP-2-C-methyl-D-erythritol 2-phosphate is bound by residues 9 to 11 (DVH) and 35 to 36 (HS). His43 is an a divalent metal cation binding site. 4-CDP-2-C-methyl-D-erythritol 2-phosphate-binding positions include 57–59 (DIG), 62–66 (FPDTD), 101–107 (AQAPKMA), 133–136 (TTTE), Phe140, and Arg143.

Belongs to the IspF family. Homotrimer. A divalent metal cation is required as a cofactor.

It catalyses the reaction 4-CDP-2-C-methyl-D-erythritol 2-phosphate = 2-C-methyl-D-erythritol 2,4-cyclic diphosphate + CMP. It participates in isoprenoid biosynthesis; isopentenyl diphosphate biosynthesis via DXP pathway; isopentenyl diphosphate from 1-deoxy-D-xylulose 5-phosphate: step 4/6. Involved in the biosynthesis of isopentenyl diphosphate (IPP) and dimethylallyl diphosphate (DMAPP), two major building blocks of isoprenoid compounds. Catalyzes the conversion of 4-diphosphocytidyl-2-C-methyl-D-erythritol 2-phosphate (CDP-ME2P) to 2-C-methyl-D-erythritol 2,4-cyclodiphosphate (ME-CPP) with a corresponding release of cytidine 5-monophosphate (CMP). The protein is 2-C-methyl-D-erythritol 2,4-cyclodiphosphate synthase of Vibrio vulnificus (strain CMCP6).